Here is a 180-residue protein sequence, read N- to C-terminus: Small ribosomal subunit protein bS21c (180 aa).

The transit peptide at 1–79 (MASTSSLLNF…PSLAFSNTLY (79 aa)) directs the protein to the chloroplast. Over residues 14–45 (LFPSNTSLPPSSNPKFPNPNSLSSQQNSISIS) the composition is skewed to low complexity. Disordered stretches follow at residues 14–49 (LFPS…SKKH) and 124–180 (NKQE…GAPF). Over residues 130–147 (KRKHREAAKRNSRRRRGP) the composition is skewed to basic residues. The span at 154-166 (GKEEATKVDKKED) shows a compositional bias: basic and acidic residues.

Component of the chloroplast small ribosomal subunit (SSU). Mature 70S chloroplast ribosomes of higher plants consist of a small (30S) and a large (50S) subunit. The 30S small subunit contains 1 molecule of ribosomal RNA (16S rRNA) and 24 different proteins. The 50S large subunit contains 3 rRNA molecules (23S, 5S and 4.5S rRNA) and 33 different proteins. bS21c binds directly to 16S ribosomal RNA.

It is found in the plastid. The protein localises to the chloroplast. In terms of biological role, component of the chloroplast ribosome (chloro-ribosome), a dedicated translation machinery responsible for the synthesis of chloroplast genome-encoded proteins, including proteins of the transcription and translation machinery and components of the photosynthetic apparatus. The sequence is that of Small ribosomal subunit protein bS21c (rps21) from Spinacia oleracea (Spinach).